Consider the following 183-residue polypeptide: Putative 3-methyladenine DNA glycosylase (183 aa).

This sequence belongs to the DNA glycosylase MPG family.

In Rickettsia conorii (strain ATCC VR-613 / Malish 7), this protein is Putative 3-methyladenine DNA glycosylase.